We begin with the raw amino-acid sequence, 388 residues long: Chorismate synthase (388 aa).

2 residues coordinate NADP(+): arginine 39 and arginine 45. The segment at 95–118 (EKNEKSRRVSRPRPGHADLVGGMK) is disordered. Residues 130–132 (RSS), 251–252 (NA), glycine 296, 311–315 (KPIPT), and arginine 337 contribute to the FMN site.

It belongs to the chorismate synthase family. As to quaternary structure, homotetramer. The cofactor is FMNH2.

The enzyme catalyses 5-O-(1-carboxyvinyl)-3-phosphoshikimate = chorismate + phosphate. It functions in the pathway metabolic intermediate biosynthesis; chorismate biosynthesis; chorismate from D-erythrose 4-phosphate and phosphoenolpyruvate: step 7/7. Catalyzes the anti-1,4-elimination of the C-3 phosphate and the C-6 proR hydrogen from 5-enolpyruvylshikimate-3-phosphate (EPSP) to yield chorismate, which is the branch point compound that serves as the starting substrate for the three terminal pathways of aromatic amino acid biosynthesis. This reaction introduces a second double bond into the aromatic ring system. This chain is Chorismate synthase, found in Listeria welshimeri serovar 6b (strain ATCC 35897 / DSM 20650 / CCUG 15529 / CIP 8149 / NCTC 11857 / SLCC 5334 / V8).